Here is a 33-residue protein sequence, read N- to C-terminus: DCLGWFKSCDPKNDKCCKNYTCSRRDRWCKYYL.

3 disulfides stabilise this stretch: C2-C17, C9-C22, and C16-C29. At L33 the chain carries Leucine amide.

The protein belongs to the neurotoxin 10 (Hwtx-1) family. 04 (CcoTx1) subfamily. Expressed by the venom gland.

It is found in the secreted. Functionally, inhibits several voltage-gated sodium channels and only one voltage-gated calcium channel (Cav2.2/CACNA1B (IC(50)=1.1 uM) and Nav1.2/SCN2A (IC(50)=3.7-80 nM), Nav1.3/SCN3A (IC(50)=88-5570 nM), Nav1.1/SCN1A (IC(50)=170-407 nM), Nav1.7/SCN9A (IC(50)=95.5-230 nM), Nav1.6/SCN6A (IC(50)=49.9-3990 nM), Nav1.4/SCN4A (IC(50)=113-400 nM or &gt;10 uM), Nav1.5/SCN5A (IC(50)=1524-1634 nM or &gt;10 uM)). The toxin acts by shifting the voltage dependence of channel activation to more depolarized potentials and by blocking the inward component of the sodium current. It shows moderate affinity for lipid bilayers without cholesterol and high affinity for lipid bilayers containing cholesterol. In vivo, this toxin causes general ataxia, lack of response to stimuli, and semiparalysis. After a few minutes, the mice are unable to stand, and breathing is reduced in rhythm and intensity. Symptoms gradually increase with progressive slowing of breathing and flaccid paralysis; death occurred within 10 to 20 minutes post injection. Animals remain totally flaccid, and no symptoms of excitatory neurotoxicity are observed. This chain is Beta-theraphotoxin-Cm1b, found in Ceratogyrus marshalli (Straighthorned baboon tarantula).